Reading from the N-terminus, the 203-residue chain is MDALALIMTMAAYLLGSISSAVLICRLLRLPDPRKVGSNNPGATNVLRIGGKGAAVAVLLCDMLKGTIPVWGGYFLGIDPIILGVIAIAACLGHMYPIFFHFKGGKGVATALGAIAPIGLDLTGLVMLTWLSVAVLFRYSSLAALVTVLVTPFYTWMFKPQYTLPVAMLCCLIVFKHHQNIRRLLSGEEPKIGEKKLIEKNSA.

Helical transmembrane passes span Leu-4 to Ile-24, Ile-68 to Ile-88, Pro-117 to Phe-137, and Thr-155 to Phe-175.

The protein belongs to the PlsY family. As to quaternary structure, probably interacts with PlsX.

It is found in the cell inner membrane. It carries out the reaction an acyl phosphate + sn-glycerol 3-phosphate = a 1-acyl-sn-glycero-3-phosphate + phosphate. The protein operates within lipid metabolism; phospholipid metabolism. Its function is as follows. Catalyzes the transfer of an acyl group from acyl-phosphate (acyl-PO(4)) to glycerol-3-phosphate (G3P) to form lysophosphatidic acid (LPA). This enzyme utilizes acyl-phosphate as fatty acyl donor, but not acyl-CoA or acyl-ACP. The protein is Glycerol-3-phosphate acyltransferase of Vibrio campbellii (strain ATCC BAA-1116).